The chain runs to 475 residues: Ribulose bisphosphate carboxylase large chain (475 aa).

Residues 1-2 (MA) constitute a propeptide that is removed on maturation. At Pro3 the chain carries N-acetylproline. Lys14 is modified (N6,N6,N6-trimethyllysine). Positions 123 and 173 each coordinate substrate. The active-site Proton acceptor is the Lys175. Lys177 contacts substrate. Residues Lys201, Asp203, and Glu204 each coordinate Mg(2+). Lys201 carries the post-translational modification N6-carboxylysine. Catalysis depends on His294, which acts as the Proton acceptor. Substrate-binding residues include Arg295, His327, and Ser379.

This sequence belongs to the RuBisCO large chain family. Type I subfamily. In terms of assembly, heterohexadecamer of 8 large chains and 8 small chains; disulfide-linked. The disulfide link is formed within the large subunit homodimers. Mg(2+) serves as cofactor. The disulfide bond which can form in the large chain dimeric partners within the hexadecamer appears to be associated with oxidative stress and protein turnover.

Its subcellular location is the plastid. The protein resides in the chloroplast. The catalysed reaction is 2 (2R)-3-phosphoglycerate + 2 H(+) = D-ribulose 1,5-bisphosphate + CO2 + H2O. It carries out the reaction D-ribulose 1,5-bisphosphate + O2 = 2-phosphoglycolate + (2R)-3-phosphoglycerate + 2 H(+). In terms of biological role, ruBisCO catalyzes two reactions: the carboxylation of D-ribulose 1,5-bisphosphate, the primary event in carbon dioxide fixation, as well as the oxidative fragmentation of the pentose substrate in the photorespiration process. Both reactions occur simultaneously and in competition at the same active site. The protein is Ribulose bisphosphate carboxylase large chain of Oedogonium cardiacum (Filamentous green alga).